Here is a 407-residue protein sequence, read N- to C-terminus: E3 ubiquitin-protein ligase TRIM13 (407 aa).

The RING-type zinc-finger motif lies at 10-58 (CPICCSLFDDPRVLPCSHNFCKKCLEGLLEGNVRNSLWRPSPFKCPTCR). A B box-type zinc finger spans residues 89–131 (PKMPVCKGHLGQPLNIFCVTDMQLICGICATRGEHTKHVFSSI). Zn(2+) is bound by residues cysteine 94, histidine 97, cysteine 117, and histidine 123. Residues 172-200 (LQLLTKDSDKVKEFFEKLQHTLDQKKNEI) adopt a coiled-coil conformation. Residues 316–336 (LLLMMVVLLGLLIFFGPTVFL) traverse the membrane as a helical segment.

The protein belongs to the TRIM/RBCC family. As to quaternary structure, interacts (via C-terminal domain) with VCP. Interacts with AKT1; the interaction ubiquitinates AKT1 and leads to its proteasomal degradation. Interacts with MDM2; the interaction ubiquitinates AKT1 and leads to its proteasomal degradation. Interacts with p62/SQSTM1. Interacts with TRAF6. Interacts with IKBKG/NEMO. In terms of processing, auto-ubiquitinated; requires the RING-type zinc finger. Auto-polyubiquitination leads to proteasomal degradation.

It localises to the endoplasmic reticulum membrane. It carries out the reaction S-ubiquitinyl-[E2 ubiquitin-conjugating enzyme]-L-cysteine + [acceptor protein]-L-lysine = [E2 ubiquitin-conjugating enzyme]-L-cysteine + N(6)-ubiquitinyl-[acceptor protein]-L-lysine.. It participates in protein modification; protein ubiquitination. In terms of biological role, endoplasmic reticulum (ER) membrane anchored E3 ligase involved in the retrotranslocation and turnover of membrane and secretory proteins from the ER through a set of processes named ER-associated degradation (ERAD). This process acts on misfolded proteins as well as in the regulated degradation of correctly folded proteins. Enhances ionizing radiation-induced p53/TP53 stability and apoptosis via ubiquitinating MDM2 and AKT1 and decreasing AKT1 kinase activity through MDM2 and AKT1 proteasomal degradation. Regulates ER stress-induced autophagy, and may act as a tumor suppressor. Also plays a role in innate immune response by stimulating NF-kappa-B activity in the TLR2 signaling pathway. Ubiquitinates TRAF6 via the 'Lys-29'-linked polyubiquitination chain resulting in NF-kappa-B activation. Participates as well in T-cell receptor-mediated NF-kappa-B activation. In the presence of TNF, modulates the IKK complex by regulating IKBKG/NEMO ubiquitination leading to the repression of NF-kappa-B. This is E3 ubiquitin-protein ligase TRIM13 (Trim13) from Mus musculus (Mouse).